Consider the following 110-residue polypeptide: UPF0339 protein SO_3888 (110 aa).

A run of 2 repeats spans residues 10 to 58 (SSND…RYAK) and 61 to 109 (AKND…IKDL).

This sequence belongs to the UPF0339 family. Duplicated subfamily.

The polypeptide is UPF0339 protein SO_3888 (Shewanella oneidensis (strain ATCC 700550 / JCM 31522 / CIP 106686 / LMG 19005 / NCIMB 14063 / MR-1)).